We begin with the raw amino-acid sequence, 540 residues long: Serine/threonine-protein phosphatase ppzA (540 aa).

Disordered stretches follow at residues 1–108 and 120–140; these read MGQS…KRGH and VDHVSDVPPTGAAPTGPSTQK. 2 stretches are compositionally biased toward polar residues: residues 15–24 and 45–54; these read SLQSYPSFSR and SDSPRGSTAG. Residues 62–88 show a composition bias toward low complexity; it reads AASVKSTTSRRSSTNQSVQSPDDTPSQ. A compositionally biased stretch (pro residues) spans 89–98; that stretch reads PDAPEPPPSP. Low complexity predominate over residues 127–136; it reads PPTGAAPTGP. 4 residues coordinate Mn(2+): Asp239, His241, Asp267, and Asn299. One can recognise a Phosphatase tensin-type domain in the interval 258–540; the sequence is PASNYLFLGD…SLVTSWGISR (283 aa). His300 serves as the catalytic Proton donor. Positions 348 and 423 each coordinate Mn(2+).

It belongs to the PPP phosphatase family. PP-Z subfamily. Interacts with at least 54 proteins, of which 31 are detected only after iron starvation and 22 are detected only in control conditions. Only the regulatory subunit of the protein phosphatase PP1 (Afu1g04800/AFUB_005140) interacts with ppzA in both conditions. It depends on Mn(2+) as a cofactor.

The protein localises to the cytoplasm. The enzyme catalyses O-phospho-L-seryl-[protein] + H2O = L-seryl-[protein] + phosphate. The catalysed reaction is O-phospho-L-threonyl-[protein] + H2O = L-threonyl-[protein] + phosphate. In terms of biological role, catalytic subunit of protein phosphatase Z (PPZ) involved in iron assimilation. Regulates secondary metabolites production, including gliotoxin, pyripyropene A, fumagillin, fumiquinazoline A, triacetyl-fusarinine C, and helvolic acid. Plays a key role in pathogenicity. This chain is Serine/threonine-protein phosphatase ppzA, found in Aspergillus fumigatus (strain CBS 144.89 / FGSC A1163 / CEA10) (Neosartorya fumigata).